The sequence spans 370 residues: Pyruvate dehydrogenase E1 component subunit alpha (370 aa).

As to quaternary structure, heterodimer of an alpha and a beta chain. Thiamine diphosphate serves as cofactor.

The catalysed reaction is N(6)-[(R)-lipoyl]-L-lysyl-[protein] + pyruvate + H(+) = N(6)-[(R)-S(8)-acetyldihydrolipoyl]-L-lysyl-[protein] + CO2. The pyruvate dehydrogenase complex catalyzes the overall conversion of pyruvate to acetyl-CoA and CO(2). It contains multiple copies of three enzymatic components: pyruvate dehydrogenase (E1), dihydrolipoamide acetyltransferase (E2) and lipoamide dehydrogenase (E3). The sequence is that of Pyruvate dehydrogenase E1 component subunit alpha (pdhA) from Staphylococcus epidermidis (strain ATCC 35984 / DSM 28319 / BCRC 17069 / CCUG 31568 / BM 3577 / RP62A).